Here is a 79-residue protein sequence, read N- to C-terminus: MELEAMSRYTSPVNPAVFPHLTVVLLAIGMFFTAWFFVYEVTSTKYTRDICKELLISLVASLFMGFGVLFLLLWVGIYV.

At Met1 the chain carries N-acetylmethionine. Residues 1-16 are Lumenal-facing; that stretch reads MELEAMSRYTSPVNPA. Residues 17-37 traverse the membrane as a helical segment; the sequence is VFPHLTVVLLAIGMFFTAWFF. The Cytoplasmic segment spans residues 38–54; the sequence is VYEVTSTKYTRDICKEL. A helical membrane pass occupies residues 55–75; it reads LISLVASLFMGFGVLFLLLWV. The Lumenal segment spans residues 76–79; sequence GIYV.

The protein belongs to the OST5 family. In terms of assembly, component of the oligosaccharyltransferase (OST) complex. OST exists in two different complex forms which contain common core subunits RPN1, RPN2, OST48, OST4, DAD1 and TMEM258, either STT3A or STT3B as catalytic subunits, and form-specific accessory subunits. STT3A complex assembly occurs through the formation of 3 subcomplexes. Subcomplex 1 contains RPN1 and TMEM258, subcomplex 2 contains the STT3A-specific subunits STT3A, DC2/OSTC, and KCP2 as well as the core subunit OST4, and subcomplex 3 contains RPN2, DAD1, and OST48. The STT3A complex can form stable complexes with the Sec61 complex or with both the Sec61 and TRAP complexes.

The protein resides in the membrane. Its subcellular location is the endoplasmic reticulum. The protein localises to the cytoplasm. Its pathway is protein modification; protein glycosylation. In terms of biological role, subunit of the oligosaccharyl transferase (OST) complex that catalyzes the initial transfer of a defined glycan (Glc(3)Man(9)GlcNAc(2) in eukaryotes) from the lipid carrier dolichol-pyrophosphate to an asparagine residue within an Asn-X-Ser/Thr consensus motif in nascent polypeptide chains, the first step in protein N-glycosylation. N-glycosylation occurs cotranslationally and the complex associates with the Sec61 complex at the channel-forming translocon complex that mediates protein translocation across the endoplasmic reticulum (ER). All subunits are required for a maximal enzyme activity. The protein is Dolichyl-diphosphooligosaccharide--protein glycosyltransferase subunit TMEM258 of Canis lupus familiaris (Dog).